Consider the following 415-residue polypeptide: MPATVIREDGAYHSFCGLTCVGWLYQKIKDSFFLVLGTHTCAHLLQNVLGVMIFARPRFGVALIEEADLSKQQPELDRIIDEIVADHHPSVIFLLSSCTPEVMKVEFDGLARAVSRPNLPVLFVPASGLDYTFSQAEDSVLQALLPFCPVAPPDDRRVVFLGSVNDAIADDFRTEAARLGIPVAGFLPESHFHDLPPIGPGTVVAPLQPYLAKVAGRLARERGATVVSSLFPFGPDGTRAFWEDVAAAMGIAVDLRERERQAWERLEPHLDVLRGKKVFFTADNLMELPLARFLRHAGCTILECSSPYINRKFHARELEALDGVRVVEQPNFDRQLRDIQELRPDLVISNLATTNPLVGHGVVAKWSTEFSFMPIHGWSGAATLAGMFTRPLKRHAQLDPLMDDPLWVAGLMPAR.

Cys16, Cys41, and Cys98 together coordinate [4Fe-4S] cluster.

Belongs to the BchN/ChlN family. In terms of assembly, protochlorophyllide reductase is composed of three subunits; BchL, BchN and BchB. Forms a heterotetramer of two BchB and two BchN subunits. It depends on [4Fe-4S] cluster as a cofactor.

The catalysed reaction is chlorophyllide a + oxidized 2[4Fe-4S]-[ferredoxin] + 2 ADP + 2 phosphate = protochlorophyllide a + reduced 2[4Fe-4S]-[ferredoxin] + 2 ATP + 2 H2O. The protein operates within porphyrin-containing compound metabolism; bacteriochlorophyll biosynthesis (light-independent). In terms of biological role, component of the dark-operative protochlorophyllide reductase (DPOR) that uses Mg-ATP and reduced ferredoxin to reduce ring D of protochlorophyllide (Pchlide) to form chlorophyllide a (Chlide). This reaction is light-independent. The NB-protein (BchN-BchB) is the catalytic component of the complex. The chain is Light-independent protochlorophyllide reductase subunit N from Roseiflexus sp. (strain RS-1).